The chain runs to 191 residues: Ribosomal RNA small subunit methyltransferase G (191 aa).

S-adenosyl-L-methionine-binding positions include Gly-59, Ile-111–Glu-112, and Arg-124.

Belongs to the methyltransferase superfamily. RNA methyltransferase RsmG family.

The protein localises to the cytoplasm. In terms of biological role, specifically methylates the N7 position of a guanine in 16S rRNA. In Mycoplasma pneumoniae (strain ATCC 29342 / M129 / Subtype 1) (Mycoplasmoides pneumoniae), this protein is Ribosomal RNA small subunit methyltransferase G.